The chain runs to 96 residues: MEQAPENQGPQREPYNEWTLELLEELKSEAVRHFPRIWLHSLGQHIYKTYGDTWTGVEALIRILQQLLFIHFRIGCQHSRIGITRQRRARNGASRS.

Residues 1–42 (MEQAPENQGPQREPYNEWTLELLEELKSEAVRHFPRIWLHSL) form a homooligomerization region. A phosphoserine; by host mark is found at Ser79, Ser94, and Ser96.

The protein belongs to the HIV-1 VPR protein family. Homooligomer, may form homodimer. Interacts with p6-gag region of the Pr55 Gag precursor protein through a (Leu-X-X)4 motif near the C-terminus of the P6gag protein. Interacts with host UNG. May interact with host RAD23A/HHR23A. Interacts with host VPRBP/DCAF1, leading to hijack the CUL4A-RBX1-DDB1-DCAF1/VPRBP complex, mediating ubiquitination of host proteins such as TERT and ZGPAT and arrest of the cell cycle in G2 phase. Phosphorylated on several residues by host. These phosphorylations regulate VPR activity for the nuclear import of the HIV-1 pre-integration complex.

The protein resides in the virion. Its subcellular location is the host nucleus. The protein localises to the host extracellular space. Its function is as follows. During virus replication, may deplete host UNG protein, and incude G2-M cell cycle arrest. Acts by targeting specific host proteins for degradation by the 26S proteasome, through association with the cellular CUL4A-DDB1 E3 ligase complex by direct interaction with host VPRPB/DCAF-1. Cell cycle arrest reportedly occurs within hours of infection and is not blocked by antiviral agents, suggesting that it is initiated by the VPR carried into the virion. Additionally, VPR induces apoptosis in a cell cycle dependent manner suggesting that these two effects are mechanistically linked. Detected in the serum and cerebrospinal fluid of AIDS patient, VPR may also induce cell death to bystander cells. Functionally, during virus entry, plays a role in the transport of the viral pre-integration (PIC) complex to the host nucleus. This function is crucial for viral infection of non-dividing macrophages. May act directly at the nuclear pore complex, by binding nucleoporins phenylalanine-glycine (FG)-repeat regions. In Human immunodeficiency virus type 1 group M subtype B (isolate SF33) (HIV-1), this protein is Protein Vpr.